A 266-amino-acid chain; its full sequence is MASDKPRNNDSIGKTLLVVVILCLVCSVVVAGAAVGLKAKQQEQRLLDKQRNILAVAGLLQPRMLAEEVQQAFATRIEPRLLDLQSGEFLKQDPATFDRSQALRDNQMSIALTPAQDIAGIRRRANVVEIYLVRGDGGQINKVILPIYGSGLWSMMYAFVAIDTDGKTVRGITYYDHGETPGLGGEIENPIWRNQWIGKRLFDDQGQPAIRIVKGRAPANDPHAVDGLSGATLTSNGVQNSFNFWLGENGFGPFLKKVREGALKNG.

Residues 16-36 (LLVVVILCLVCSVVVAGAAVG) form a helical membrane-spanning segment. FMN phosphoryl threonine is present on Thr-232.

It belongs to the NqrC family. As to quaternary structure, composed of six subunits; NqrA, NqrB, NqrC, NqrD, NqrE and NqrF. Requires FMN as cofactor.

It localises to the cell inner membrane. The catalysed reaction is a ubiquinone + n Na(+)(in) + NADH + H(+) = a ubiquinol + n Na(+)(out) + NAD(+). NQR complex catalyzes the reduction of ubiquinone-1 to ubiquinol by two successive reactions, coupled with the transport of Na(+) ions from the cytoplasm to the periplasm. NqrA to NqrE are probably involved in the second step, the conversion of ubisemiquinone to ubiquinol. This Yersinia pestis protein is Na(+)-translocating NADH-quinone reductase subunit C.